The primary structure comprises 326 residues: Flap endonuclease 1 (326 aa).

The tract at residues 1–98 (MGVQFNDSIP…KTREERRKVK (98 aa)) is N-domain. Positions 27, 80, 152, 154, 173, 175, and 224 each coordinate Mg(2+). The tract at residues 116–245 (DMQKYAKRIN…KKALTIIKNK (130 aa)) is I-domain. An interaction with PCNA region spans residues 318–326 (SQTSLDSWF).

It belongs to the XPG/RAD2 endonuclease family. FEN1 subfamily. In terms of assembly, interacts with PCNA. PCNA stimulates the nuclease activity without altering cleavage specificity. Mg(2+) serves as cofactor.

Structure-specific nuclease with 5'-flap endonuclease and 5'-3' exonuclease activities involved in DNA replication and repair. During DNA replication, cleaves the 5'-overhanging flap structure that is generated by displacement synthesis when DNA polymerase encounters the 5'-end of a downstream Okazaki fragment. Binds the unpaired 3'-DNA end and kinks the DNA to facilitate 5' cleavage specificity. Cleaves one nucleotide into the double-stranded DNA from the junction in flap DNA, leaving a nick for ligation. Also involved in the base excision repair (BER) pathway. Acts as a genome stabilization factor that prevents flaps from equilibrating into structures that lead to duplications and deletions. Also possesses 5'-3' exonuclease activity on nicked or gapped double-stranded DNA. This Methanococcus aeolicus (strain ATCC BAA-1280 / DSM 17508 / OCM 812 / Nankai-3) protein is Flap endonuclease 1.